A 144-amino-acid polypeptide reads, in one-letter code: Putative acetyltransferase SAOUHSC_00995 (144 aa).

An N-acetyltransferase domain is found at 1 to 141; it reads MFSKVNNQKM…EHIEMTKKLT (141 aa). CoA-binding positions include 71–73, Gly79, and 112–114; these read VAV and PFY.

This sequence belongs to the UPF0039 (ElaA) family.

In terms of biological role, could catalyze the transfer of an acetyl group from acetyl coenzyme A (AcCoA) to an acceptor substrate and release both CoA and the acetylated product. The chain is Putative acetyltransferase SAOUHSC_00995 from Staphylococcus aureus (strain NCTC 8325 / PS 47).